The chain runs to 265 residues: Elongation factor 1-delta (265 aa).

The segment covering 31-54 has biased composition (polar residues); the sequence is MGSASNKPHNSPQSAASALSNSGD. Disordered regions lie at residues 31–64 and 118–155; these read MGSA…RVAN and KVQV…DAEA. Positions 130 to 153 are enriched in acidic residues; sequence GTGEDDDDDDDIDLFGSDNEEEDA.

It belongs to the EF-1-beta/EF-1-delta family. As to quaternary structure, EF-1 is composed of 4 subunits: alpha, beta, delta, and gamma.

Functionally, EF-1-beta and EF-1-delta stimulate the exchange of GDP bound to EF-1-alpha to GTP. This Xenopus laevis (African clawed frog) protein is Elongation factor 1-delta (eef1d).